The primary structure comprises 312 residues: Olfactory receptor 6N1 (312 aa).

Topologically, residues 1–25 are extracellular; the sequence is MDTGNWSQVAEFIILGFPHLQGVQI. The N-linked (GlcNAc...) asparagine glycan is linked to Asn5. A helical transmembrane segment spans residues 26-46; sequence YLFLLLLLIYLMTVLGNLLIF. Residues 47–54 are Cytoplasmic-facing; it reads LVVCLDSR. Residues 55-75 traverse the membrane as a helical segment; it reads LHTPMYHFVSILSFSELGYTA. The Extracellular portion of the chain corresponds to 76–99; it reads ATIPKMLANLLSEKKTISFSGCLL. An intrachain disulfide couples Cys97 to Cys189. A helical membrane pass occupies residues 100 to 120; the sequence is QIYFFHSLGATECYLLTAMAY. At 121-139 the chain is on the cytoplasmic side; sequence DRYLAICRPLHYPTLMTPT. A helical transmembrane segment spans residues 140–160; it reads LCAEIAIGCWLGGLAGPVVEI. Topologically, residues 161 to 197 are extracellular; it reads SLISRLPFCGPNRIQHVFCDFPPVLSLACTDTSINVL. Residues 198–217 form a helical membrane-spanning segment; that stretch reads VDFVINSCKILATFLLILCS. Residues 218–237 are Cytoplasmic-facing; the sequence is YVQIICTVLRIPSAAGKRKA. A helical transmembrane segment spans residues 238 to 258; sequence ISTCASHFTVVLIFYGSILSM. The Extracellular segment spans residues 259–271; that stretch reads YVQLKKSYSLDYD. A helical transmembrane segment spans residues 272-292; it reads QALAVVYSVLTPFLNPFIYSL. The Cytoplasmic portion of the chain corresponds to 293–312; it reads RNKEIKEAVRRQLKRIGILA.

The protein belongs to the G-protein coupled receptor 1 family.

The protein localises to the cell membrane. Odorant receptor. The sequence is that of Olfactory receptor 6N1 (OR6N1) from Homo sapiens (Human).